A 359-amino-acid chain; its full sequence is DNA replication and repair protein RecF (359 aa).

30–37 (GQNAQGKT) contributes to the ATP binding site.

This sequence belongs to the RecF family.

It localises to the cytoplasm. In terms of biological role, the RecF protein is involved in DNA metabolism; it is required for DNA replication and normal SOS inducibility. RecF binds preferentially to single-stranded, linear DNA. It also seems to bind ATP. In Lactococcus lactis subsp. cremoris (strain MG1363), this protein is DNA replication and repair protein RecF.